We begin with the raw amino-acid sequence, 256 residues long: Phosphoribosylaminoimidazole-succinocarboxamide synthase (256 aa).

The disordered stretch occupies residues 234–256 (KPQKPAAAKKKAPVSKKTVKRTR). Residues 240-256 (AAKKKAPVSKKTVKRTR) are compositionally biased toward basic residues.

This sequence belongs to the SAICAR synthetase family.

The catalysed reaction is 5-amino-1-(5-phospho-D-ribosyl)imidazole-4-carboxylate + L-aspartate + ATP = (2S)-2-[5-amino-1-(5-phospho-beta-D-ribosyl)imidazole-4-carboxamido]succinate + ADP + phosphate + 2 H(+). Its pathway is purine metabolism; IMP biosynthesis via de novo pathway; 5-amino-1-(5-phospho-D-ribosyl)imidazole-4-carboxamide from 5-amino-1-(5-phospho-D-ribosyl)imidazole-4-carboxylate: step 1/2. In Methanoregula boonei (strain DSM 21154 / JCM 14090 / 6A8), this protein is Phosphoribosylaminoimidazole-succinocarboxamide synthase.